Reading from the N-terminus, the 379-residue chain is Alcohol dehydrogenase class-2 isozyme 2 (379 aa).

The Zn(2+) site is built by C47, H69, C99, C102, C105, C113, and C176. NAD(+) is bound by residues 205–210, D229, K234, 298–300, and R374; these read GLGGVG and VGV.

Belongs to the zinc-containing alcohol dehydrogenase family. Class-II subfamily. As to quaternary structure, homodimer. Requires Zn(2+) as cofactor.

The protein localises to the cytoplasm. The enzyme catalyses a primary alcohol + NAD(+) = an aldehyde + NADH + H(+). The catalysed reaction is a secondary alcohol + NAD(+) = a ketone + NADH + H(+). The polypeptide is Alcohol dehydrogenase class-2 isozyme 2 (ADH2-2) (Oryctolagus cuniculus (Rabbit)).